The sequence spans 855 residues: DNA mismatch repair protein MutS (855 aa).

An ATP-binding site is contributed by 616–623; that stretch reads GPNMGGKS.

Belongs to the DNA mismatch repair MutS family.

This protein is involved in the repair of mismatches in DNA. It is possible that it carries out the mismatch recognition step. This protein has a weak ATPase activity. The chain is DNA mismatch repair protein MutS from Salmonella paratyphi A (strain ATCC 9150 / SARB42).